We begin with the raw amino-acid sequence, 154 residues long: Myoglobin (154 aa).

In terms of domain architecture, Globin spans 2-148 (GLSDGEWQLV…FRKDMASNYK (147 aa)). A Phosphoserine modification is found at serine 4. Position 65 (histidine 65) interacts with nitrite. Residue histidine 65 coordinates O2. At threonine 68 the chain carries Phosphothreonine. Histidine 94 is a heme b binding site.

Belongs to the globin family. As to quaternary structure, monomeric.

It localises to the cytoplasm. It is found in the sarcoplasm. It carries out the reaction Fe(III)-heme b-[protein] + nitric oxide + H2O = Fe(II)-heme b-[protein] + nitrite + 2 H(+). The enzyme catalyses H2O2 + AH2 = A + 2 H2O. Monomeric heme protein which primary function is to store oxygen and facilitate its diffusion within muscle tissues. Reversibly binds oxygen through a pentacoordinated heme iron and enables its timely and efficient release as needed during periods of heightened demand. Depending on the oxidative conditions of tissues and cells, and in addition to its ability to bind oxygen, it also has a nitrite reductase activity whereby it regulates the production of bioactive nitric oxide. Under stress conditions, like hypoxia and anoxia, it also protects cells against reactive oxygen species thanks to its pseudoperoxidase activity. This is Myoglobin (MB) from Pan troglodytes (Chimpanzee).